Consider the following 427-residue polypeptide: Histidinol dehydrogenase (427 aa).

NAD(+) contacts are provided by Tyr127, Gln185, and Asn208. 3 residues coordinate substrate: Ser232, Gln254, and His257. Zn(2+) contacts are provided by Gln254 and His257. Active-site proton acceptor residues include Glu321 and His322. His322, Asp355, Glu409, and His414 together coordinate substrate. A Zn(2+)-binding site is contributed by Asp355. His414 contacts Zn(2+).

Belongs to the histidinol dehydrogenase family. The cofactor is Zn(2+).

It catalyses the reaction L-histidinol + 2 NAD(+) + H2O = L-histidine + 2 NADH + 3 H(+). It functions in the pathway amino-acid biosynthesis; L-histidine biosynthesis; L-histidine from 5-phospho-alpha-D-ribose 1-diphosphate: step 9/9. Its function is as follows. Catalyzes the sequential NAD-dependent oxidations of L-histidinol to L-histidinaldehyde and then to L-histidine. This Haemophilus influenzae (strain 86-028NP) protein is Histidinol dehydrogenase.